A 691-amino-acid chain; its full sequence is Pre-mRNA-splicing factor CLF1 (691 aa).

HAT repeat units follow at residues 52-84 (EYQG…WELE), 86-118 (KEYA…AELK), 120-152 (RNIN…VEEM), 154-185 (GNIP…LEQR), 187-218 (GEYD…FEEE), 220-258 (GTSD…YEAK), 260-294 (HDLD…FEKQ), 304-336 (VVLS…LEEA), 338-372 (GDID…LWIF), 382-418 (KNPE…FEIR), 420-451 (GDLA…MEQK), 453-485 (YEFG…LERG), 487-521 (DDLD…FEEE), 523-554 (GEYD…FEIN), 574-612 (EAKA…FEKT), and 617-650 (EDIE…YIFP).

Belongs to the crooked-neck family. Associated with the spliceosome.

The protein resides in the nucleus. Functionally, involved in pre-mRNA splicing and cell cycle progression. Required for the spliceosome assembly and initiation of the DNA replication. The chain is Pre-mRNA-splicing factor CLF1 (CLF1) from Pyricularia oryzae (strain 70-15 / ATCC MYA-4617 / FGSC 8958) (Rice blast fungus).